The primary structure comprises 338 residues: UPF0252 protein PF1496 (338 aa).

A helical membrane pass occupies residues 100-120 (ILSMLFLVFILFPAFTSHIWS).

This sequence belongs to the UPF0252 family.

It localises to the membrane. The chain is UPF0252 protein PF1496 from Pyrococcus furiosus (strain ATCC 43587 / DSM 3638 / JCM 8422 / Vc1).